The following is a 240-amino-acid chain: Small ribosomal subunit protein uS3 (240 aa).

Positions 39–109 constitute a KH type-2 domain; it reads IRQYIEKTLN…QIRVNVIEVP (71 aa). Residues 219–240 are disordered; it reads APPSQPRRKSRRQQFDDRSQDG. Residues 231-240 are compositionally biased toward basic and acidic residues; that stretch reads QQFDDRSQDG.

This sequence belongs to the universal ribosomal protein uS3 family. In terms of assembly, part of the 30S ribosomal subunit. Forms a tight complex with proteins S10 and S14.

In terms of biological role, binds the lower part of the 30S subunit head. Binds mRNA in the 70S ribosome, positioning it for translation. The sequence is that of Small ribosomal subunit protein uS3 from Synechocystis sp. (strain ATCC 27184 / PCC 6803 / Kazusa).